The primary structure comprises 242 residues: 1-(5-phosphoribosyl)-5-[(5-phosphoribosylamino)methylideneamino] imidazole-4-carboxamide isomerase (242 aa).

Residue Asp10 is the Proton acceptor of the active site. The active-site Proton donor is Asp131.

Belongs to the HisA/HisF family.

It is found in the cytoplasm. It carries out the reaction 1-(5-phospho-beta-D-ribosyl)-5-[(5-phospho-beta-D-ribosylamino)methylideneamino]imidazole-4-carboxamide = 5-[(5-phospho-1-deoxy-D-ribulos-1-ylimino)methylamino]-1-(5-phospho-beta-D-ribosyl)imidazole-4-carboxamide. Its pathway is amino-acid biosynthesis; L-histidine biosynthesis; L-histidine from 5-phospho-alpha-D-ribose 1-diphosphate: step 4/9. This is 1-(5-phosphoribosyl)-5-[(5-phosphoribosylamino)methylideneamino] imidazole-4-carboxamide isomerase from Bifidobacterium animalis subsp. lactis (strain AD011).